Here is a 107-residue protein sequence, read N- to C-terminus: EPIDERMAL PATTERNING FACTOR-like protein 5 (107 aa).

A signal peptide spans M1 to A22. 3 disulfide bridges follow: C64-C98, C68-C74, and C71-C100.

The protein belongs to the plant cysteine rich small secretory peptide family. Epidermal patterning factor subfamily. Interacts with ERECTA. In terms of tissue distribution, expressed asymetically in the hypocotyl, on the side proximal to the folded cotyledons at germination. Detected in developing flowers, the chalazal region of ovules and near the root apex, but not in inflorescence stems. Expressed in cotyledons, flowers, adult leaves and fruits.

It localises to the secreted. Its function is as follows. Controls stomatal patterning. Mediates differentiation of stomatal lineage cells to pavement cells and stomatal development inhibition. TMM (AC Q9SSD1) functions to dampen or block CLL1 signaling. Acts as a growth-regulatory ligand for ERECTA family receptors. Promotes fruit growth and fertility. The protein is EPIDERMAL PATTERNING FACTOR-like protein 5 of Arabidopsis thaliana (Mouse-ear cress).